The following is a 524-amino-acid chain: Acetyl-CoA hydrolase (524 aa).

275–279 (GIGNI) provides a ligand contact to CoA. Glu300 (5-glutamyl coenzyme A thioester intermediate) is an active-site residue. CoA contacts are provided by Asn390 and Gly394.

This sequence belongs to the acetyl-CoA hydrolase/transferase family.

Its subcellular location is the cytoplasm. The catalysed reaction is acetyl-CoA + H2O = acetate + CoA + H(+). Functionally, presumably involved in regulating the intracellular acetyl-CoA pool for fatty acid and cholesterol synthesis and fatty acid oxidation. The sequence is that of Acetyl-CoA hydrolase (ACH1) from Candida albicans (strain SC5314 / ATCC MYA-2876) (Yeast).